Reading from the N-terminus, the 336-residue chain is tRNA N6-adenosine threonylcarbamoyltransferase (336 aa).

Fe cation contacts are provided by histidine 111 and histidine 115. Residues leucine 133–glycine 137, aspartate 166, glycine 179, and asparagine 276 contribute to the substrate site. A Fe cation-binding site is contributed by aspartate 301.

Belongs to the KAE1 / TsaD family. Fe(2+) is required as a cofactor.

Its subcellular location is the cytoplasm. It carries out the reaction L-threonylcarbamoyladenylate + adenosine(37) in tRNA = N(6)-L-threonylcarbamoyladenosine(37) in tRNA + AMP + H(+). In terms of biological role, required for the formation of a threonylcarbamoyl group on adenosine at position 37 (t(6)A37) in tRNAs that read codons beginning with adenine. Is involved in the transfer of the threonylcarbamoyl moiety of threonylcarbamoyl-AMP (TC-AMP) to the N6 group of A37, together with TsaE and TsaB. TsaD likely plays a direct catalytic role in this reaction. This Wolbachia pipientis subsp. Culex pipiens (strain wPip) protein is tRNA N6-adenosine threonylcarbamoyltransferase.